We begin with the raw amino-acid sequence, 755 residues long: Tryptophan 2-monooxygenase (755 aa).

Positions 247, 267, 275, and 295 each coordinate FMN. Position 295 (Arg295) interacts with substrate.

Belongs to the tryptophan 2-monooxygenase family. It depends on FMN as a cofactor.

The enzyme catalyses L-tryptophan + O2 = indole-3-acetamide + CO2 + H2O. It participates in plant hormone metabolism; auxin biosynthesis. This is Tryptophan 2-monooxygenase (tms1) from Rhizobium radiobacter (Agrobacterium tumefaciens).